We begin with the raw amino-acid sequence, 182 residues long: MMIDDFETHAARSSGDLWSEVCSSLPEPREQHGGQFTDSFEPSSPGDPHTDSPRAANFSPWEPMADSEVYIAGLENRLKRIKGQTSEVTSREMLRSLSQAKKECWDRFLHDAQTSELFQEGNFDQSALEQFKRWLSPERVAINAEELEYLLLPTQNSETPASSSQTDKPCVEEEEECPSPEK.

A compositionally biased stretch (basic and acidic residues) spans 1–10 (MMIDDFETHA). Disordered stretches follow at residues 1 to 61 (MMID…FSPW) and 153 to 182 (PTQNSETPASSSQTDKPCVEEEEECPSPEK). Over residues 153 to 167 (PTQNSETPASSSQTD) the composition is skewed to polar residues. Acidic residues predominate over residues 172-182 (EEEEECPSPEK).

As to quaternary structure, associates with adaptor protein complex 2 (AP-2).

Its subcellular location is the membrane. The protein resides in the coated pit. Its function is as follows. Regulates clathrin-mediated endocytsois of cargos such as transferrin probably through the association and modulation of adaptor protein complex 2 (AP-2). Has a role in ciliogenesis and is required for proper cephalic and left/right axis development. The chain is Coiled-coil domain-containing protein 32 from Danio rerio (Zebrafish).